The primary structure comprises 105 residues: Small ribosomal subunit protein eS24 (105 aa).

The segment at 86–105 (LERNKIEADEEADEEAAEEA) is disordered. Positions 93–105 (ADEEADEEAAEEA) are enriched in acidic residues.

This sequence belongs to the eukaryotic ribosomal protein eS24 family.

The sequence is that of Small ribosomal subunit protein eS24 from Natronomonas pharaonis (strain ATCC 35678 / DSM 2160 / CIP 103997 / JCM 8858 / NBRC 14720 / NCIMB 2260 / Gabara) (Halobacterium pharaonis).